Consider the following 476-residue polypeptide: Protein PAL OF QUIRKY (476 aa).

Positions methionine 1–glycine 14 are cleaved as a signal peptide. Positions threonine 204 to aspartate 256 are disordered. Gly residues predominate over residues serine 212–cysteine 222. Residues serine 233 to serine 252 show a composition bias toward low complexity.

In terms of assembly, homodimer. Interacts with QKY and SUB/SCM at the plasma membrane. In terms of tissue distribution, observed in seedlings, roots, shoots, leaves, stems, inflorescence and flowers.

Its subcellular location is the cell membrane. It is found in the endomembrane system. Functionally, collaboratively with SUB and QKY, regulates cell growth anisotropy during gynoecium development, thus linking together cell-cell communication and cellular growth. The chain is Protein PAL OF QUIRKY from Arabidopsis thaliana (Mouse-ear cress).